Reading from the N-terminus, the 385-residue chain is 8-amino-7-oxononanoate synthase (385 aa).

Arg-21 lines the substrate pocket. 108–109 (GF) lines the pyridoxal 5'-phosphate pocket. His-133 contributes to the substrate binding site. Pyridoxal 5'-phosphate is bound by residues Ser-179, His-207, and Thr-233. Lys-236 is subject to N6-(pyridoxal phosphate)lysine. A substrate-binding site is contributed by Thr-352.

This sequence belongs to the class-II pyridoxal-phosphate-dependent aminotransferase family. BioF subfamily. In terms of assembly, homodimer. It depends on pyridoxal 5'-phosphate as a cofactor.

The catalysed reaction is 6-carboxyhexanoyl-[ACP] + L-alanine + H(+) = (8S)-8-amino-7-oxononanoate + holo-[ACP] + CO2. The protein operates within cofactor biosynthesis; biotin biosynthesis. Its function is as follows. Catalyzes the decarboxylative condensation of pimeloyl-[acyl-carrier protein] and L-alanine to produce 8-amino-7-oxononanoate (AON), [acyl-carrier protein], and carbon dioxide. This is 8-amino-7-oxononanoate synthase from Klebsiella pneumoniae (strain 342).